The sequence spans 114 residues: Iron-sulfur cluster insertion protein ErpA (114 aa).

Positions 42, 106, and 108 each coordinate iron-sulfur cluster.

This sequence belongs to the HesB/IscA family. In terms of assembly, homodimer. The cofactor is iron-sulfur cluster.

Functionally, required for insertion of 4Fe-4S clusters for at least IspG. This Haemophilus ducreyi (strain 35000HP / ATCC 700724) protein is Iron-sulfur cluster insertion protein ErpA.